The primary structure comprises 430 residues: Xaa-Pro aminopeptidase (430 aa).

Mn(2+)-binding residues include aspartate 254, aspartate 265, histidine 348, glutamate 377, and glutamate 400.

This sequence belongs to the peptidase M24B family. As to quaternary structure, homotetramer. Requires Mn(2+) as cofactor.

The catalysed reaction is Release of any N-terminal amino acid, including proline, that is linked to proline, even from a dipeptide or tripeptide.. The protein is Xaa-Pro aminopeptidase (pepP) of Haemophilus influenzae (strain ATCC 51907 / DSM 11121 / KW20 / Rd).